A 226-amino-acid chain; its full sequence is Urease accessory protein UreF (226 aa).

This sequence belongs to the UreF family. As to quaternary structure, ureD, UreF and UreG form a complex that acts as a GTP-hydrolysis-dependent molecular chaperone, activating the urease apoprotein by helping to assemble the nickel containing metallocenter of UreC. The UreE protein probably delivers the nickel.

The protein resides in the cytoplasm. Required for maturation of urease via the functional incorporation of the urease nickel metallocenter. This chain is Urease accessory protein UreF, found in Paraburkholderia xenovorans (strain LB400).